We begin with the raw amino-acid sequence, 388 residues long: Phosphoglycerate kinase (388 aa).

Residues 21–23, Arg-36, 59–62, Arg-114, and Arg-147 each bind substrate; these read DLN and HLGR. ATP contacts are provided by residues Lys-198, Glu-315, and 341 to 344; that span reads GGDT.

The protein belongs to the phosphoglycerate kinase family. In terms of assembly, monomer.

It is found in the cytoplasm. It catalyses the reaction (2R)-3-phosphoglycerate + ATP = (2R)-3-phospho-glyceroyl phosphate + ADP. It functions in the pathway carbohydrate degradation; glycolysis; pyruvate from D-glyceraldehyde 3-phosphate: step 2/5. The protein is Phosphoglycerate kinase of Hahella chejuensis (strain KCTC 2396).